The chain runs to 229 residues: Cytochrome c oxidase subunit 2 (229 aa).

Residues 1 to 26 (MSTWANLGLQDSASPLMEQLIFFHDH) lie on the Mitochondrial intermembrane side of the membrane. A helical transmembrane segment spans residues 27–48 (ALLILVMITVLVGYLMFMLFFN). Topologically, residues 49–62 (SYVNRFLLHGQLIE) are mitochondrial matrix. A helical membrane pass occupies residues 63 to 82 (MIWTILPAIILLFIAMPSLR). The Mitochondrial intermembrane segment spans residues 83–229 (LLYLLDEINE…IKWISNSVNS (147 aa)). The Cu cation site is built by His161, Cys196, Glu198, Cys200, His204, and Met207. Glu198 lines the Mg(2+) pocket.

The protein belongs to the cytochrome c oxidase subunit 2 family. As to quaternary structure, component of the cytochrome c oxidase (complex IV, CIV), a multisubunit enzyme composed of a catalytic core of 3 subunits and several supernumerary subunits. The complex exists as a monomer or a dimer and forms supercomplexes (SCs) in the inner mitochondrial membrane with ubiquinol-cytochrome c oxidoreductase (cytochrome b-c1 complex, complex III, CIII). Cu cation serves as cofactor.

The protein localises to the mitochondrion inner membrane. It carries out the reaction 4 Fe(II)-[cytochrome c] + O2 + 8 H(+)(in) = 4 Fe(III)-[cytochrome c] + 2 H2O + 4 H(+)(out). Functionally, component of the cytochrome c oxidase, the last enzyme in the mitochondrial electron transport chain which drives oxidative phosphorylation. The respiratory chain contains 3 multisubunit complexes succinate dehydrogenase (complex II, CII), ubiquinol-cytochrome c oxidoreductase (cytochrome b-c1 complex, complex III, CIII) and cytochrome c oxidase (complex IV, CIV), that cooperate to transfer electrons derived from NADH and succinate to molecular oxygen, creating an electrochemical gradient over the inner membrane that drives transmembrane transport and the ATP synthase. Cytochrome c oxidase is the component of the respiratory chain that catalyzes the reduction of oxygen to water. Electrons originating from reduced cytochrome c in the intermembrane space (IMS) are transferred via the dinuclear copper A center (CU(A)) of subunit 2 and heme A of subunit 1 to the active site in subunit 1, a binuclear center (BNC) formed by heme A3 and copper B (CU(B)). The BNC reduces molecular oxygen to 2 water molecules using 4 electrons from cytochrome c in the IMS and 4 protons from the mitochondrial matrix. This Drosophila miranda (Fruit fly) protein is Cytochrome c oxidase subunit 2 (mt:CoII).